The following is a 385-amino-acid chain: 4-hydroxy-3-methylbut-2-en-1-yl diphosphate synthase (flavodoxin) 1 (385 aa).

Cysteine 280, cysteine 283, cysteine 315, and glutamate 322 together coordinate [4Fe-4S] cluster.

This sequence belongs to the IspG family. It depends on [4Fe-4S] cluster as a cofactor.

The enzyme catalyses (2E)-4-hydroxy-3-methylbut-2-enyl diphosphate + oxidized [flavodoxin] + H2O + 2 H(+) = 2-C-methyl-D-erythritol 2,4-cyclic diphosphate + reduced [flavodoxin]. Its pathway is isoprenoid biosynthesis; isopentenyl diphosphate biosynthesis via DXP pathway; isopentenyl diphosphate from 1-deoxy-D-xylulose 5-phosphate: step 5/6. Its function is as follows. Converts 2C-methyl-D-erythritol 2,4-cyclodiphosphate (ME-2,4cPP) into 1-hydroxy-2-methyl-2-(E)-butenyl 4-diphosphate. This is 4-hydroxy-3-methylbut-2-en-1-yl diphosphate synthase (flavodoxin) 1 from Streptomyces avermitilis (strain ATCC 31267 / DSM 46492 / JCM 5070 / NBRC 14893 / NCIMB 12804 / NRRL 8165 / MA-4680).